A 606-amino-acid polypeptide reads, in one-letter code: MLGSHHQLLIAATAAAAAAAAAEPQLQLQHLLPAAPTTPAVISNPINSIGPINQISSSSHPSNNNQQAVFEKAITISSIAIKRRPTLPQTPASAPQVLSPSPKRQCAAAVSVLPVTVPVPVPVSVPLPVSVPVPVSVKGHPISHTHQIAHTHQISHSHPISHPHHHQLSFAHPTQFAAAVAAHHQQQQQQQAQQQQQAVQQQQQQAVQQQQVAYAVAASPQLQQQQQQQQHRLAQFNQAAAAALLNQHLQQQHQAQQQQHQAQQQSLAHYGGYQLHRYAPQQQQQHILLSSGSSSSKHNSNNNSNTSAGAASAAVPIATSVAAVPTTGGSLPDSPAHESHSHESNSATASAPTTPSPAGSVTSAAPTATATAAAAGSAAATAAATGTPATSAVSDSNNNLNSSSSSNSNSNAIMENQMALAPLGLSQSMDSVNTASNEEEVRTLFVSGLPMDAKPRELYLLFRAYEGYEGSLLKVTSKNGKTASPVGFVTFHTRAGAEAAKQDLQGVRFDPDMPQTIRLEFAKSNTKVSKPKPQPNTATTASHPALMHPLTGHLGGPFFPGGPELWHHPLAYSAAAAAELPGAAALQHATLVHPALHPQVPVRSYL.

The short motif at 81–105 (IKRRPTLPQTPASAPQVLSPSPKRQ) is the Nuclear localization signal element. Tandem repeats lie at residues 91-95 (PASAP), 109-113 (AVSVL), 114-118 (PVTVP), 122-126 (PVSVP), 128-132 (PVSVP), 134-138 (PVSVK), and 159-163 (PISHP). The 7 X 5 AA approximate repeats of P-V-S-V-P stretch occupies residues 91–164 (PASAPQVLSP…SHSHPISHPH (74 aa)). Disordered regions lie at residues 147-166 (QIAHTHQISHSHPISHPHHH), 282-311 (QQQQHILLSSGSSSSKHNSNNNSNTSAGAA), 324-365 (VPTT…TSAA), and 388-410 (PATSAVSDSNNNLNSSSSSNSNS). Low complexity predominate over residues 344–365 (SNSATASAPTTPSPAGSVTSAA). The RRM domain maps to 442–524 (RTLFVSGLPM…QTIRLEFAKS (83 aa)).

In terms of tissue distribution, expressed in neural precursors and their daughter cells in the embryonic peripheral nervous system. Less abundant in a number of glial cells in the peripheral and central nervous systems and also present at low levels in the developing gut.

It is found in the nucleus. Functionally, may play a role in the development or function of the peripheral nervous system by regulating the processing of nervous system-specific transcripts. The chain is Protein couch potato (cpo) from Drosophila melanogaster (Fruit fly).